A 486-amino-acid chain; its full sequence is Vicilin-like seed storage protein At3g22640 (486 aa).

Positions 1 to 22 (MAITNKLIITLLLLISIAVVHC) are cleaved as a signal peptide. The interval 34 to 60 (PPQQGEQEGPRRRPGGGSGEGWEEEST) is disordered. Cupin type-1 domains are found at residues 64–223 (YHFR…ELLG) and 278–448 (FNLF…KVAE). 3 N-linked (GlcNAc...) asparagine glycosylation sites follow: Asn-168, Asn-316, and Asn-455.

It belongs to the 7S seed storage protein family. Predominantly expressed in the embryo and endosperm of developing seeds. Also present in seedlings.

Functionally, seed storage protein. (Microbial infection) Involved in tobacco mosaic virus (TMV) replication. Required for endoplasmic reticulum (ER) aggregations mediated by TMV main replicase (P126) upon viral infection. In Arabidopsis thaliana (Mouse-ear cress), this protein is Vicilin-like seed storage protein At3g22640.